Consider the following 345-residue polypeptide: Anthranilate phosphoribosyltransferase (345 aa).

5-phospho-alpha-D-ribose 1-diphosphate contacts are provided by residues Gly84, 87-88, Thr92, 94-97, 112-120, and Ser124; these read GD, NIST, and KHGNRSVSS. Gly84 is an anthranilate binding site. Mg(2+) is bound at residue Ser96. Position 115 (Asn115) interacts with anthranilate. Residue Arg170 participates in anthranilate binding. 2 residues coordinate Mg(2+): Asp229 and Glu230.

Belongs to the anthranilate phosphoribosyltransferase family. As to quaternary structure, homodimer. Requires Mg(2+) as cofactor.

The enzyme catalyses N-(5-phospho-beta-D-ribosyl)anthranilate + diphosphate = 5-phospho-alpha-D-ribose 1-diphosphate + anthranilate. It participates in amino-acid biosynthesis; L-tryptophan biosynthesis; L-tryptophan from chorismate: step 2/5. Its function is as follows. Catalyzes the transfer of the phosphoribosyl group of 5-phosphorylribose-1-pyrophosphate (PRPP) to anthranilate to yield N-(5'-phosphoribosyl)-anthranilate (PRA). The polypeptide is Anthranilate phosphoribosyltransferase (Xanthomonas euvesicatoria pv. vesicatoria (strain 85-10) (Xanthomonas campestris pv. vesicatoria)).